Reading from the N-terminus, the 504-residue chain is Anaerobic nitric oxide reductase transcription regulator NorR (504 aa).

Aspartate 57 is modified (4-aspartylphosphate). A Sigma-54 factor interaction domain is found at 187–416 (MIGLSPGMMQ…LEHAIHRAVV (230 aa)). ATP contacts are provided by residues 215 to 222 (GETGTGKE) and 278 to 287 (ADNGTLFLDE). Residues 479–498 (WAACARALEMDVANLHRLAK) constitute a DNA-binding region (H-T-H motif).

It functions in the pathway nitrogen metabolism; nitric oxide reduction. Its function is as follows. Required for the expression of anaerobic nitric oxide (NO) reductase, acts as a transcriptional activator for at least the norVW operon. Activation also requires sigma-54. The polypeptide is Anaerobic nitric oxide reductase transcription regulator NorR (Enterobacter sp. (strain 638)).